We begin with the raw amino-acid sequence, 371 residues long: Heterodimeric geranylgeranyl pyrophosphate synthase large subunit 1, chloroplastic (371 aa).

A chloroplast-targeting transit peptide spans 1-51; that stretch reads MASVTLGSWIVVHHHNHHHPSSILTKSRSRSCPITLTKPISFRSKRTVSSS. Ser52 is modified (N-acetylserine). Positions 116, 119, and 148 each coordinate isopentenyl diphosphate. Asp155 and Asp161 together coordinate Mg(2+). Arg166 contributes to the dimethylallyl diphosphate binding site. Arg167 serves as a coordination point for isopentenyl diphosphate. Residues Lys256, Thr257, Gln294, Lys311, and Lys321 each coordinate dimethylallyl diphosphate.

The protein belongs to the FPP/GGPP synthase family. As to quaternary structure, forms homodimers. Part of a heterodimeric geranyl(geranyl)diphosphate synthase. Interacts with GGR. The cofactor is Mg(2+). As to expression, expressed ubiquitously.

It localises to the plastid. Its subcellular location is the chloroplast. It is found in the cytoplasm. The enzyme catalyses isopentenyl diphosphate + dimethylallyl diphosphate = (2E)-geranyl diphosphate + diphosphate. It catalyses the reaction isopentenyl diphosphate + (2E)-geranyl diphosphate = (2E,6E)-farnesyl diphosphate + diphosphate. It carries out the reaction isopentenyl diphosphate + (2E,6E)-farnesyl diphosphate = (2E,6E,10E)-geranylgeranyl diphosphate + diphosphate. It participates in isoprenoid biosynthesis; farnesyl diphosphate biosynthesis; farnesyl diphosphate from geranyl diphosphate and isopentenyl diphosphate: step 1/1. Its pathway is isoprenoid biosynthesis; geranyl diphosphate biosynthesis; geranyl diphosphate from dimethylallyl diphosphate and isopentenyl diphosphate: step 1/1. The protein operates within isoprenoid biosynthesis; geranylgeranyl diphosphate biosynthesis; geranylgeranyl diphosphate from farnesyl diphosphate and isopentenyl diphosphate: step 1/1. In terms of biological role, heterodimeric geranyl(geranyl)-diphosphate (GPP) synthase large subunit. In vitro, the large subunit catalyzes mainly the trans-addition of the three molecules of IPP onto DMAPP to form geranylgeranyl pyrophosphate while the small subunit alone is inactive. Upon association of the two subunits, the product profile changes and the production of gerany-diphosphate is strongly increased. The protein is Heterodimeric geranylgeranyl pyrophosphate synthase large subunit 1, chloroplastic (GGPPS1) of Arabidopsis thaliana (Mouse-ear cress).